A 188-amino-acid chain; its full sequence is MKKIGVLALQGAVDEHIQMIKSAGALPSKVKHPSDLNELDGLVLPGGESTTMRKIMKRYDLIEPVRAFAKEGKAIFGTCAGLVLLSKEIEGGEESLGLIDTTAVRNGFGRQKESFEAELNVEIFSDAPFEAVFIRAPYLIEPSPEVSVLATFEDKIVAAKEANILVTAFHPELTNDNRFMRFFIEKMV.

47–49 is an L-glutamine binding site; sequence GES. The active-site Nucleophile is the C79. L-glutamine is bound by residues R105 and 134-135; that span reads IR. Active-site charge relay system residues include H170 and E172.

The protein belongs to the glutaminase PdxT/SNO family. In terms of assembly, in the presence of PdxS, forms a dodecamer of heterodimers. Only shows activity in the heterodimer.

The catalysed reaction is aldehydo-D-ribose 5-phosphate + D-glyceraldehyde 3-phosphate + L-glutamine = pyridoxal 5'-phosphate + L-glutamate + phosphate + 3 H2O + H(+). The enzyme catalyses L-glutamine + H2O = L-glutamate + NH4(+). It participates in cofactor biosynthesis; pyridoxal 5'-phosphate biosynthesis. Its function is as follows. Catalyzes the hydrolysis of glutamine to glutamate and ammonia as part of the biosynthesis of pyridoxal 5'-phosphate. The resulting ammonia molecule is channeled to the active site of PdxS. This is Pyridoxal 5'-phosphate synthase subunit PdxT from Listeria welshimeri serovar 6b (strain ATCC 35897 / DSM 20650 / CCUG 15529 / CIP 8149 / NCTC 11857 / SLCC 5334 / V8).